The chain runs to 240 residues: Pathogenesis-related thaumatin-like protein 3.5 (240 aa).

The N-terminal stretch at 1-20 is a signal peptide; that stretch reads MASLRLATLAMMVLFGSCRA. 8 disulfides stabilise this stretch: Cys31–Cys237, Cys79–Cys89, Cys94–Cys100, Cys145–Cys227, Cys150–Cys210, Cys158–Cys173, Cys177–Cys186, and Cys187–Cys197.

Belongs to the thaumatin family. As to expression, strongly expressed in pollen grains. Also present at weak levels in seedling roots, in sapling stems and in developing male strobili.

Its function is as follows. May be involved in disease resistance. The polypeptide is Pathogenesis-related thaumatin-like protein 3.5 (Cryptomeria japonica (Japanese cedar)).